We begin with the raw amino-acid sequence, 178 residues long: Extracellular fatty acid-binding protein (178 aa).

A signal peptide spans 1–20; that stretch reads MRTLALSLGLALLCLLHAKA. Threonine 43 provides a ligand contact to enterobactin. The 1-tetradecanoyl-sn-glycerol 3-phosphate site is built by tyrosine 72 and lysine 104. Cysteine 80 and cysteine 173 are joined by a disulfide. Positions 104, 123, and 134 each coordinate enterobactin. 134–136 is a 1-tetradecanoyl-sn-glycerol 3-phosphate binding site; that stretch reads RLY.

It belongs to the calycin superfamily. Lipocalin family. Monomer.

The protein resides in the secreted. In terms of biological role, siderocalin-like lipocalin tightly binding a variety of bacterial ferric siderophores, also binds long-chain unsaturated fatty acids such as linoleic acid, oleic acid, arachidonic acid and, with a lower affinity, long chain saturated fatty acids such as steraic acid. May act as an antibacterial factor, through dual ligand specificity, both as a siderophore-sequestrating molecule and a lysophosphatidic acid (LPA) sensor. The sequence is that of Extracellular fatty acid-binding protein from Coturnix japonica (Japanese quail).